A 371-amino-acid chain; its full sequence is Bifunctional enzyme IspD/IspF (371 aa).

Positions 1–210 (MSEISLIMLA…LDLPTPSFEI (210 aa)) are 2-C-methyl-D-erythritol 4-phosphate cytidylyltransferase. Positions 211–371 (FTGNGFDVHE…NLKYFDWTRL (161 aa)) are 2-C-methyl-D-erythritol 2,4-cyclodiphosphate synthase. The a divalent metal cation site is built by D217 and H219. 4-CDP-2-C-methyl-D-erythritol 2-phosphate-binding positions include 217 to 219 (DVH) and 243 to 244 (HS). Position 251 (H251) interacts with a divalent metal cation. 4-CDP-2-C-methyl-D-erythritol 2-phosphate contacts are provided by residues 265–267 (DIG), 270–274 (YPDTD), 341–344 (TTTE), F348, and R351.

The protein in the N-terminal section; belongs to the IspD/TarI cytidylyltransferase family. IspD subfamily. In the C-terminal section; belongs to the IspF family. A divalent metal cation is required as a cofactor.

It catalyses the reaction 2-C-methyl-D-erythritol 4-phosphate + CTP + H(+) = 4-CDP-2-C-methyl-D-erythritol + diphosphate. The catalysed reaction is 4-CDP-2-C-methyl-D-erythritol 2-phosphate = 2-C-methyl-D-erythritol 2,4-cyclic diphosphate + CMP. It functions in the pathway isoprenoid biosynthesis; isopentenyl diphosphate biosynthesis via DXP pathway; isopentenyl diphosphate from 1-deoxy-D-xylulose 5-phosphate: step 2/6. Its pathway is isoprenoid biosynthesis; isopentenyl diphosphate biosynthesis via DXP pathway; isopentenyl diphosphate from 1-deoxy-D-xylulose 5-phosphate: step 4/6. Functionally, bifunctional enzyme that catalyzes the formation of 4-diphosphocytidyl-2-C-methyl-D-erythritol from CTP and 2-C-methyl-D-erythritol 4-phosphate (MEP) (IspD), and catalyzes the conversion of 4-diphosphocytidyl-2-C-methyl-D-erythritol 2-phosphate (CDP-ME2P) to 2-C-methyl-D-erythritol 2,4-cyclodiphosphate (ME-CPP) with a corresponding release of cytidine 5-monophosphate (CMP) (IspF). The polypeptide is Bifunctional enzyme IspD/IspF (Campylobacter jejuni subsp. jejuni serotype O:6 (strain 81116 / NCTC 11828)).